The sequence spans 85 residues: uncharacterized protein (85 aa).

The signal sequence occupies residues 1–35 (MIEDPSKKISLWQKWINVDPKKRILFSLGLFALSA).

The protein resides in the secreted. This is an uncharacterized protein from Dictyostelium discoideum (Social amoeba).